The chain runs to 608 residues: Isocitrate dehydrogenase kinase/phosphatase (608 aa).

ATP contacts are provided by residues 327-333 (APGIKGL) and Lys-348. Residue Asp-383 is part of the active site. Positions 589–608 (FDSTPDAGDGDSAGDAQRAA) are disordered.

It belongs to the AceK family.

The protein localises to the cytoplasm. It carries out the reaction L-seryl-[isocitrate dehydrogenase] + ATP = O-phospho-L-seryl-[isocitrate dehydrogenase] + ADP + H(+). Bifunctional enzyme which can phosphorylate or dephosphorylate isocitrate dehydrogenase (IDH) on a specific serine residue. This is a regulatory mechanism which enables bacteria to bypass the Krebs cycle via the glyoxylate shunt in response to the source of carbon. When bacteria are grown on glucose, IDH is fully active and unphosphorylated, but when grown on acetate or ethanol, the activity of IDH declines drastically concomitant with its phosphorylation. In Burkholderia ambifaria (strain MC40-6), this protein is Isocitrate dehydrogenase kinase/phosphatase.